Here is a 198-residue protein sequence, read N- to C-terminus: ATP-dependent Clp protease proteolytic subunit (198 aa).

The active-site Nucleophile is the serine 98. Residue histidine 123 is part of the active site.

Belongs to the peptidase S14 family. As to quaternary structure, fourteen ClpP subunits assemble into 2 heptameric rings which stack back to back to give a disk-like structure with a central cavity, resembling the structure of eukaryotic proteasomes.

It is found in the cytoplasm. The enzyme catalyses Hydrolysis of proteins to small peptides in the presence of ATP and magnesium. alpha-casein is the usual test substrate. In the absence of ATP, only oligopeptides shorter than five residues are hydrolyzed (such as succinyl-Leu-Tyr-|-NHMec, and Leu-Tyr-Leu-|-Tyr-Trp, in which cleavage of the -Tyr-|-Leu- and -Tyr-|-Trp bonds also occurs).. Functionally, cleaves peptides in various proteins in a process that requires ATP hydrolysis. Has a chymotrypsin-like activity. Plays a major role in the degradation of misfolded proteins. This chain is ATP-dependent Clp protease proteolytic subunit, found in Bacillus pumilus (strain SAFR-032).